The following is a 341-amino-acid chain: Ketol-acid reductoisomerase (NADP(+)) (341 aa).

The region spanning 2 to 181 is the KARI N-terminal Rossmann domain; the sequence is VKVYYNGDAN…GSARAGVIET (180 aa). Residues 25–28, R48, S52, and 82–85 each bind NADP(+); these read YGSQ and DEHQ. H107 is an active-site residue. An NADP(+)-binding site is contributed by G133. The 146-residue stretch at 182–327 folds into the KARI C-terminal knotted domain; sequence TFKEETETDL…RELRKMMPFV (146 aa). Residues D190, E194, E226, and E230 each contribute to the Mg(2+) site. Residue S251 coordinates substrate.

This sequence belongs to the ketol-acid reductoisomerase family. Requires Mg(2+) as cofactor.

It carries out the reaction (2R)-2,3-dihydroxy-3-methylbutanoate + NADP(+) = (2S)-2-acetolactate + NADPH + H(+). It catalyses the reaction (2R,3R)-2,3-dihydroxy-3-methylpentanoate + NADP(+) = (S)-2-ethyl-2-hydroxy-3-oxobutanoate + NADPH + H(+). It participates in amino-acid biosynthesis; L-isoleucine biosynthesis; L-isoleucine from 2-oxobutanoate: step 2/4. It functions in the pathway amino-acid biosynthesis; L-valine biosynthesis; L-valine from pyruvate: step 2/4. Its function is as follows. Involved in the biosynthesis of branched-chain amino acids (BCAA). Catalyzes an alkyl-migration followed by a ketol-acid reduction of (S)-2-acetolactate (S2AL) to yield (R)-2,3-dihydroxy-isovalerate. In the isomerase reaction, S2AL is rearranged via a Mg-dependent methyl migration to produce 3-hydroxy-3-methyl-2-ketobutyrate (HMKB). In the reductase reaction, this 2-ketoacid undergoes a metal-dependent reduction by NADPH to yield (R)-2,3-dihydroxy-isovalerate. The protein is Ketol-acid reductoisomerase (NADP(+)) of Anoxybacillus flavithermus (strain DSM 21510 / WK1).